Here is a 203-residue protein sequence, read N- to C-terminus: uncharacterized protein (203 aa).

A helical membrane pass occupies residues 180-200; sequence VYLLLFGIPLLILIFLIIFFI.

It is found in the virion. The protein localises to the host membrane. This is an uncharacterized protein from Acanthamoeba polyphaga (Amoeba).